A 284-amino-acid polypeptide reads, in one-letter code: Protease HtpX (284 aa).

The next 2 helical transmembrane spans lie at 4 to 24 and 33 to 53; these read ILLFLATNAAVLIVFNIILSL and MGLLIMAALFGFTGSIISLLM. A Zn(2+)-binding site is contributed by H139. The active site involves E140. H143 is a binding site for Zn(2+). A run of 2 helical transmembrane segments spans residues 147-167 and 187-207; these read GDMVTMTLLQGVLNTFVIFAA and IYFLVAMVLEVVFGFLASMIA. E215 serves as a coordination point for Zn(2+).

This sequence belongs to the peptidase M48B family. It depends on Zn(2+) as a cofactor.

The protein resides in the cell inner membrane. In Mannheimia succiniciproducens (strain KCTC 0769BP / MBEL55E), this protein is Protease HtpX.